Consider the following 690-residue polypeptide: Proprotein convertase subtilisin/kexin type 9 (690 aa).

Residues 1-28 (MGTVRSRRLWWPLPLLLLLLRGPAGARA) form the signal peptide. A propeptide spanning residues 29–150 (QEDDDGDYEE…IEEDSYVFAQ (122 aa)) is cleaved from the precursor. A Sulfotyrosine modification is found at Tyr-36. A Phosphoserine modification is found at Ser-45. Residues 75–147 (TYVVVLKEET…VDYIEEDSYV (73 aa)) form the Inhibitor I9 domain. The Peptidase S8 domain maps to 153–459 (PWNLERITPA…GWQLFCRTVW (307 aa)). Catalysis depends on charge relay system residues Asp-184 and His-224. Intrachain disulfides connect Cys-221-Cys-253 and Cys-321-Cys-356. Ser-384 serves as the catalytic Charge relay system. Residues 448-690 (GAGWQLFCRT…HLAQASQELQ (243 aa)) form a C-terminal domain region. Intrachain disulfides connect Cys-455–Cys-525, Cys-475–Cys-524, and Cys-484–Cys-507. Asn-531 is a glycosylation site (N-linked (GlcNAc...) asparagine). Disulfide bonds link Cys-532–Cys-599, Cys-550–Cys-598, Cys-560–Cys-586, Cys-606–Cys-677, Cys-624–Cys-676, and Cys-633–Cys-652. At Ser-686 the chain carries Phosphoserine.

This sequence belongs to the peptidase S8 family. In terms of assembly, monomer. Can self-associate to form dimers and higher multimers which may have increased LDLR degrading activity. The precursor protein but not the mature protein may form multimers. Interacts with APOB, VLDLR, LRP8/APOER2 and BACE1. The full-length immature form (pro-PCSK9) interacts with SCNN1A, SCNN1B and SCNN1G. The pro-PCSK9 form (via C-terminal domain) interacts with LDLR. Interacts (via the C-terminal domain) with ANXA2 (via repeat Annexin 1); the interaction inhibits the degradation of LDLR. Ca(2+) serves as cofactor. In terms of processing, cleavage by furin and PCSK5 generates a truncated inactive protein that is unable to induce LDLR degradation. Post-translationally, undergoes autocatalytic cleavage in the endoplasmic reticulum to release the propeptide from the N-terminus and the cleavage of the propeptide is strictly required for its maturation and activation. The cleaved propeptide however remains associated with the catalytic domain through non-covalent interactions, preventing potential substrates from accessing its active site. As a result, it is secreted from cells as a propeptide-containing, enzymatically inactive protein. Phosphorylation protects the propeptide against proteolysis.

It localises to the cytoplasm. Its subcellular location is the secreted. The protein resides in the endosome. The protein localises to the lysosome. It is found in the cell surface. It localises to the endoplasmic reticulum. Its subcellular location is the golgi apparatus. Its proteolytic activity is autoinhibited by the non-covalent binding of the propeptide to the catalytic domain. Inhibited by EGTA. Its function is as follows. Crucial player in the regulation of plasma cholesterol homeostasis. Binds to low-density lipid receptor family members: low density lipoprotein receptor (LDLR), very low density lipoprotein receptor (VLDLR), apolipoprotein E receptor (LRP1/APOER) and apolipoprotein receptor 2 (LRP8/APOER2), and promotes their degradation in intracellular acidic compartments. Acts via a non-proteolytic mechanism to enhance the degradation of the hepatic LDLR through a clathrin LDLRAP1/ARH-mediated pathway. May prevent the recycling of LDLR from endosomes to the cell surface or direct it to lysosomes for degradation. Can induce ubiquitination of LDLR leading to its subsequent degradation. Inhibits intracellular degradation of APOB via the autophagosome/lysosome pathway in a LDLR-independent manner. Involved in the disposal of non-acetylated intermediates of BACE1 in the early secretory pathway. Inhibits epithelial Na(+) channel (ENaC)-mediated Na(+) absorption by reducing ENaC surface expression primarily by increasing its proteasomal degradation. Regulates neuronal apoptosis via modulation of LRP8/APOER2 levels and related anti-apoptotic signaling pathways. This chain is Proprotein convertase subtilisin/kexin type 9 (PCSK9), found in Ateles geoffroyi (Black-handed spider monkey).